Consider the following 268-residue polypeptide: NAD kinase (268 aa).

Asp45 acts as the Proton acceptor in catalysis. NAD(+) contacts are provided by residues 45–46 (DG), 122–123 (NE), Arg148, Asp150, 161–166 (TAYGKS), Ala185, and Gln223.

It belongs to the NAD kinase family. A divalent metal cation serves as cofactor.

It localises to the cytoplasm. It carries out the reaction NAD(+) + ATP = ADP + NADP(+) + H(+). Its function is as follows. Involved in the regulation of the intracellular balance of NAD and NADP, and is a key enzyme in the biosynthesis of NADP. Catalyzes specifically the phosphorylation on 2'-hydroxyl of the adenosine moiety of NAD to yield NADP. The polypeptide is NAD kinase (Latilactobacillus sakei subsp. sakei (strain 23K) (Lactobacillus sakei subsp. sakei)).